Consider the following 479-residue polypeptide: Ribosomal RNA small subunit methyltransferase F (479 aa).

S-adenosyl-L-methionine-binding positions include 125–131, E149, D176, and D194; that span reads AAAPGSK. C247 (nucleophile) is an active-site residue.

This sequence belongs to the class I-like SAM-binding methyltransferase superfamily. RsmB/NOP family.

The protein resides in the cytoplasm. It carries out the reaction cytidine(1407) in 16S rRNA + S-adenosyl-L-methionine = 5-methylcytidine(1407) in 16S rRNA + S-adenosyl-L-homocysteine + H(+). Specifically methylates the cytosine at position 1407 (m5C1407) of 16S rRNA. This is Ribosomal RNA small subunit methyltransferase F from Escherichia coli (strain SMS-3-5 / SECEC).